The primary structure comprises 228 residues: UPF0173 metal-dependent hydrolase lmo1577 (228 aa).

Belongs to the UPF0173 family.

The chain is UPF0173 metal-dependent hydrolase lmo1577 from Listeria monocytogenes serovar 1/2a (strain ATCC BAA-679 / EGD-e).